Here is a 753-residue protein sequence, read N- to C-terminus: Dolichyl-phosphate-mannose--protein mannosyltransferase 3 (753 aa).

The Cytoplasmic segment spans residues 1–50 (MPYRVATGYSEKSTDDDLIWRTPIVKEELEDADNFLKDDAELYDKVKNES). Residues 51-71 (AVSHLDTIVMPIIFTVLGMFT) form a helical membrane-spanning segment. Over 72–148 (RMYKIGRNNH…IDYVKMRLFQ (77 aa)) the chain is Lumenal. N-linked (GlcNAc...) asparagine glycosylation is present at Asn-124. A helical transmembrane segment spans residues 149–169 (AMFSSLCVPLAYFTGRAIGFS). Residues 170 to 174 (RLSVW) are Cytoplasmic-facing. Residues 175 to 195 (LFTILVIFENSYATLGKFILL) traverse the membrane as a helical segment. The Lumenal portion of the chain corresponds to 196 to 235 (DSMLLFFTVSSYFCLAKFHTMRKSPFSARWWLWLCLTGLN). The chain crosses the membrane as a helical span at residues 236-256 (LGCAISVKMVGLFIISVVGIY). Residues 257–282 (TISELWNLLSDRSVSWKVYVNHWLAR) lie on the Cytoplasmic side of the membrane. A helical membrane pass occupies residues 283–303 (IFGLIIIPVCVFLLCFKIHFD). Residues 304-602 (LLSNSGPGDS…IKYFLLGSPA (299 aa)) lie on the Lumenal side of the membrane. The N-linked (GlcNAc...) asparagine glycan is linked to Asn-324. The 56-residue stretch at 332–387 (PRDVALGSSIISIKNQALGGALLHSHVQPFPEGSEQQQVTVYGYSDANNEWFFQRI) folds into the MIR 1 domain. A glycan (N-linked (GlcNAc...) asparagine) is linked at Asn-398. MIR domains follow at residues 401–457 (IEFV…IEIV) and 465–523 (PTLL…IETH). Residues 603 to 623 (SVWPSSIAVCALIIHVIFLTL) traverse the membrane as a helical segment. The Cytoplasmic segment spans residues 624–639 (KWQRQCVILSDPVERD). Residues 640 to 660 (VFVMAAFYPLLAWLLHYMPFV) form a helical membrane-spanning segment. At 661 to 665 (VMSRV) the chain is on the lumenal side. A helical transmembrane segment spans residues 666–686 (VYAHHYLPTLYFALMILSYYF). Residues 687–703 (DMITKRWATRNTGKFLR) are Cytoplasmic-facing. The helical transmembrane segment at 704–724 (LGAYIVYGSIVIAGFFYFSPF) threads the bilayer. Over 725-753 (SFGMDGPVDDYAYLAWLPTWQIVEDIRNT) the chain is Lumenal.

This sequence belongs to the glycosyltransferase 39 family. As to quaternary structure, PMT3 and PMT5 form a functional heterodimer. Also forms a minor complex with PMT1.

Its subcellular location is the endoplasmic reticulum membrane. The enzyme catalyses a di-trans,poly-cis-dolichyl beta-D-mannosyl phosphate + L-seryl-[protein] = 3-O-(alpha-D-mannosyl)-L-seryl-[protein] + a di-trans,poly-cis-dolichyl phosphate + H(+). The catalysed reaction is a di-trans,poly-cis-dolichyl beta-D-mannosyl phosphate + L-threonyl-[protein] = 3-O-(alpha-D-mannosyl)-L-threonyl-[protein] + a di-trans,poly-cis-dolichyl phosphate + H(+). Its pathway is protein modification; protein glycosylation. Its function is as follows. Protein O-mannosyltransferase involved in O-glycosylation which is essential for cell wall rigidity. Forms a heterodimeric complex with PMT5 and more rarely with PMT1 to transfer mannose from Dol-P-mannose to Ser or Thr residues on proteins. Seems to have redundant activity to PMT2. The sequence is that of Dolichyl-phosphate-mannose--protein mannosyltransferase 3 from Saccharomyces cerevisiae (strain ATCC 204508 / S288c) (Baker's yeast).